The primary structure comprises 796 residues: Nuclear GTPase SLIP-GC (796 aa).

107–114 (GITGAGKS) contacts GTP. Coiled-coil stretches lie at residues 158–185 (SDQE…EEAD) and 742–776 (GLCK…LRRS).

The protein resides in the nucleus speckle. In terms of biological role, nuclear GTPase found in germinal center B-cells, where it may inhibit function of the activation-induced cytidine deaminase AICDA. Reduces somatic hypermutation in B-cells which may enhance genome stability. This Mus musculus (Mouse) protein is Nuclear GTPase SLIP-GC.